Consider the following 690-residue polypeptide: Elongation factor G (690 aa).

The tr-type G domain maps to 8–283; it reads EDYRNFGIMA…AVVDFLPSPL (276 aa). GTP is bound by residues 17–24, 81–85, and 135–138; these read AHIDAGKT, DTPGH, and NKMD.

Belongs to the TRAFAC class translation factor GTPase superfamily. Classic translation factor GTPase family. EF-G/EF-2 subfamily.

The protein localises to the cytoplasm. Catalyzes the GTP-dependent ribosomal translocation step during translation elongation. During this step, the ribosome changes from the pre-translocational (PRE) to the post-translocational (POST) state as the newly formed A-site-bound peptidyl-tRNA and P-site-bound deacylated tRNA move to the P and E sites, respectively. Catalyzes the coordinated movement of the two tRNA molecules, the mRNA and conformational changes in the ribosome. The sequence is that of Elongation factor G from Nitrobacter hamburgensis (strain DSM 10229 / NCIMB 13809 / X14).